We begin with the raw amino-acid sequence, 466 residues long: E3 SUMO-protein ligase TRIM60 (466 aa).

The segment at 15–56 (CYICSDFMEDPVTSRCGHNFCFACLRLLWDDLQGNIFCPVCQ) adopts an RING-type zinc-finger fold. The B box-type zinc finger occupies 91–132 (EEHTVCPKHDQPLVLFCVRDRDVLCTQCSLSVEHQGHYTCPI). Residues Cys-96, His-99, Cys-118, and His-124 each coordinate Zn(2+). Residues 171-223 (LREEAQYQKIEIRYEIGQIKLFLQSEYEAHLNESHMEELRSFSELNGYLETLL) are a coiled coil. In terms of domain architecture, B30.2/SPRY spans 272–462 (LSLPAQYSGL…LEILTHPTPD (191 aa)).

Belongs to the TRIM/RBCC family.

Its function is as follows. E3 SUMO-protein ligase that mediates SUMOylation of TAB2 leading to inhibition of NF-kappa-B and MAPK pathways by suppressing the TRAF6/TAB2/TAK1 complex. In Mus musculus (Mouse), this protein is E3 SUMO-protein ligase TRIM60 (Trim60).